The primary structure comprises 389 residues: Maintenance of mitochondrial morphology protein 1-1 (389 aa).

The Lumenal segment spans residues 1–22 (MSQFVLPAVASEGIINWPFLTG). The chain crosses the membrane as a helical span at residues 23–43 (FMLGQFSVGLVLLIFVRFFIF). At 44–389 (SDQTEPDINT…YRSLQTSPRR (346 aa)) the chain is on the cytoplasmic side. The SMP-LTD domain maps to 83–278 (QPESLDWFSV…YPEYQQFELP (196 aa)). Disordered stretches follow at residues 283–345 (KTSA…PKFI) and 360–389 (FYEMQGTAGSSSGSAVADEAYRSLQTSPRR). The segment covering 330 to 341 (MSMSSQRPNINN) has biased composition (polar residues).

Belongs to the MMM1 family. As to quaternary structure, homodimer. Component of the ER-mitochondria encounter structure (ERMES) or MDM complex, composed of MMM1, MDM10, MDM12 and MDM34. An MMM1 homodimer associates with one molecule of MDM12 on each side in a pairwise head-to-tail manner, and the SMP-LTD domains of MMM1 and MDM12 generate a continuous hydrophobic tunnel for phospholipid trafficking.

The protein resides in the endoplasmic reticulum membrane. Its function is as follows. Component of the ERMES/MDM complex, which serves as a molecular tether to connect the endoplasmic reticulum (ER) and mitochondria. Components of this complex are involved in the control of mitochondrial shape and protein biogenesis, and function in nonvesicular lipid trafficking between the ER and mitochondria. The MDM12-MMM11 subcomplex functions in the major beta-barrel assembly pathway that is responsible for biogenesis of all outer membrane beta-barrel proteins, and acts in a late step after the SAM complex. The MDM10-MDM12-MMM1 subcomplex further acts in the TOM40-specific pathway after the action of the MDM12-MMM1 complex. Essential for establishing and maintaining the structure of mitochondria and maintenance of mtDNA nucleoids. The chain is Maintenance of mitochondrial morphology protein 1-1 from Yarrowia lipolytica (strain CLIB 122 / E 150) (Yeast).